Here is a 331-residue protein sequence, read N- to C-terminus: MPAKMLKWLLIHIFLIHSIFCQDAPAQMPFFANSDPMMSKLSQIQFADAPTLKGDKYPDVDAHRIIAPIISPIMEVFDQMKENQRARDQAEKIRKDREDHPLSTSRSLWEMFQRLQRPTTTTTEAPPLIERLFKPYIEPWQKQLDDFSKDMAGITLIPTTTTTPAPTTTTTPNFLEKSLSMFFPSLRRKPQSIPTLPPTTTPTPRLFDPEMFDRLFFKRDKRQATIAPAPKFDIFTVPPPPPLFQEWEKPILSLSNPFTLNPLMKMFTTPSPPQTLAPLPKIPEPNPYEIKKGLPEPQFKLQDPFYNPLFPSRKSKMFDFLAGGEAGRLLG.

The signal sequence occupies residues 1–21 (MPAKMLKWLLIHIFLIHSIFC).

In terms of tissue distribution, expressed in the hypodermal syncitium but not in hypodermal seam cells.

Its subcellular location is the secreted. Negative regulator of the osmotic stress response. Acts via the transmembrane protein ptr-23. This is Osmotic avoidance abnormal protein 8 (osm-8) from Caenorhabditis elegans.